The following is a 251-amino-acid chain: Flap endonuclease Xni (251 aa).

The tract at residues 51-72 is disordered; it reads EDDRSDSWRHQSLPDYKAGRSP. Asp-104 serves as a coordination point for Mg(2+). The 5'-3' exonuclease domain maps to 160–249; it reads VLPHQLPDYW…LSGNLQQLRL (90 aa). K(+) contacts are provided by Leu-171, Ala-172, Pro-180, Val-182, and Ile-185. Residues 184-189 form an interaction with DNA region; that stretch reads GIGAKT.

Belongs to the Xni family. Mg(2+) is required as a cofactor. Requires K(+) as cofactor.

Functionally, has flap endonuclease activity. During DNA replication, flap endonucleases cleave the 5'-overhanging flap structure that is generated by displacement synthesis when DNA polymerase encounters the 5'-end of a downstream Okazaki fragment. The polypeptide is Flap endonuclease Xni (Yersinia enterocolitica serotype O:8 / biotype 1B (strain NCTC 13174 / 8081)).